The chain runs to 567 residues: Probable diguanylate cyclase DgcQ (567 aa).

2 consecutive transmembrane segments (helical) span residues 20 to 40 (FGPG…STLL) and 357 to 377 (IALT…WGVI). The region spanning 425-560 (QPFSVIQLDL…GRNRICASDA (136 aa)) is the GGDEF domain. D433 is a binding site for Mg(2+). Positions 441, 446, and 450 each coordinate substrate. E476 provides a ligand contact to Mg(2+). Catalysis depends on E476, which acts as the Proton acceptor.

In terms of assembly, homodimer. The cofactor is Mg(2+).

The protein resides in the cell inner membrane. It catalyses the reaction 2 GTP = 3',3'-c-di-GMP + 2 diphosphate. Its pathway is glycan metabolism; bacterial cellulose biosynthesis. It participates in purine metabolism; 3',5'-cyclic di-GMP biosynthesis. Functionally, catalyzes the synthesis of cyclic-di-GMP (c-di-GMP) via the condensation of 2 GTP molecules. Cyclic-di-GMP is a second messenger which controls cell surface-associated traits in bacteria. Involved in the regulation of cellulose production. The chain is Probable diguanylate cyclase DgcQ from Salmonella typhi.